Reading from the N-terminus, the 389-residue chain is Innexin-6 (389 aa).

4 consecutive transmembrane segments (helical) span residues 36–56 (VVIL…GDPI), 111–131 (VFAL…AMIA), 190–210 (LFYT…FYIL), and 276–296 (LFIF…VNCF).

It belongs to the pannexin family.

It is found in the cell membrane. It localises to the cell junction. The protein resides in the gap junction. Its function is as follows. Structural component of the gap junctions. The sequence is that of Innexin-6 (inx-6) from Caenorhabditis elegans.